The primary structure comprises 788 residues: Protein translocase subunit SecA (788 aa).

Residues Q85, 103 to 107 (GEGKT), and D494 each bind ATP.

Belongs to the SecA family. As to quaternary structure, monomer and homodimer. Part of the essential Sec protein translocation apparatus which comprises SecA, SecYEG and auxiliary proteins SecDF. Other proteins may also be involved.

The protein localises to the cell membrane. It localises to the cytoplasm. The enzyme catalyses ATP + H2O + cellular proteinSide 1 = ADP + phosphate + cellular proteinSide 2.. In terms of biological role, part of the Sec protein translocase complex. Interacts with the SecYEG preprotein conducting channel. Has a central role in coupling the hydrolysis of ATP to the transfer of proteins into and across the cell membrane, serving as an ATP-driven molecular motor driving the stepwise translocation of polypeptide chains across the membrane. The sequence is that of Protein translocase subunit SecA from Oenococcus oeni (strain ATCC BAA-331 / PSU-1).